The primary structure comprises 107 residues: Toxin MT2730 (107 aa).

The segment at 1–42 (MTHKRTKRQPAIAAGLNAPRRNRVGRQHGWPADVPSAEQRRA) is disordered.

Functionally, toxic component of a type II toxin-antitoxin (TA) system. Its toxic effect is neutralized by coexpression with cognate antitoxin MT2731. This chain is Toxin MT2730, found in Mycobacterium tuberculosis (strain CDC 1551 / Oshkosh).